Consider the following 79-residue polypeptide: Short neurotoxin 2 (79 aa).

The first 21 residues, 1 to 21, serve as a signal peptide directing secretion; sequence MKTLLLTLVMVTIMCLDLGYT. Disulfide bonds link C24–C41, C34–C59, C63–C71, and C72–C77.

The protein belongs to the three-finger toxin family. Short-chain subfamily. Type III alpha-neurotoxin sub-subfamily. Expressed by the venom gland.

The protein localises to the secreted. Functionally, binds with high affinity to muscle nicotinic acetylcholine receptor (nAChR) and hinders acetylcholine binding to the receptor, thereby impairing neuromuscular transmission. Competes with the binding of alpha-bungarotoxin on muscle AChR (from Torpedo) with an IC(50) of 0.30 uM. Causes muscle paralysis, spasms and increased respiration. In Pseudonaja textilis (Eastern brown snake), this protein is Short neurotoxin 2.